Consider the following 94-residue polypeptide: Co-chaperonin GroES (94 aa).

It belongs to the GroES chaperonin family. Heptamer of 7 subunits arranged in a ring. Interacts with the chaperonin GroEL.

It is found in the cytoplasm. Together with the chaperonin GroEL, plays an essential role in assisting protein folding. The GroEL-GroES system forms a nano-cage that allows encapsulation of the non-native substrate proteins and provides a physical environment optimized to promote and accelerate protein folding. GroES binds to the apical surface of the GroEL ring, thereby capping the opening of the GroEL channel. In Exiguobacterium sibiricum (strain DSM 17290 / CCUG 55495 / CIP 109462 / JCM 13490 / 255-15), this protein is Co-chaperonin GroES.